Here is a 154-residue protein sequence, read N- to C-terminus: Myoglobin (154 aa).

Residues 2–148 form the Globin domain; that stretch reads GLSDGEWQLV…FRNDMATKYK (147 aa). At S4 the chain carries Phosphoserine. H65 is a nitrite binding site. H65 serves as a coordination point for O2. Heme b is bound at residue H94.

It belongs to the globin family. Monomeric.

Its subcellular location is the cytoplasm. The protein resides in the sarcoplasm. The catalysed reaction is Fe(III)-heme b-[protein] + nitric oxide + H2O = Fe(II)-heme b-[protein] + nitrite + 2 H(+). It catalyses the reaction H2O2 + AH2 = A + 2 H2O. Functionally, monomeric heme protein which primary function is to store oxygen and facilitate its diffusion within muscle tissues. Reversibly binds oxygen through a pentacoordinated heme iron and enables its timely and efficient release as needed during periods of heightened demand. Depending on the oxidative conditions of tissues and cells, and in addition to its ability to bind oxygen, it also has a nitrite reductase activity whereby it regulates the production of bioactive nitric oxide. Under stress conditions, like hypoxia and anoxia, it also protects cells against reactive oxygen species thanks to its pseudoperoxidase activity. The sequence is that of Myoglobin (MB) from Tachyglossus aculeatus aculeatus (Southeast Australian short-beaked echidna).